Here is a 318-residue protein sequence, read N- to C-terminus: Methionyl-tRNA formyltransferase (318 aa).

Residue 117–120 participates in (6S)-5,6,7,8-tetrahydrofolate binding; sequence SLLP.

The protein belongs to the Fmt family.

The enzyme catalyses L-methionyl-tRNA(fMet) + (6R)-10-formyltetrahydrofolate = N-formyl-L-methionyl-tRNA(fMet) + (6S)-5,6,7,8-tetrahydrofolate + H(+). Functionally, attaches a formyl group to the free amino group of methionyl-tRNA(fMet). The formyl group appears to play a dual role in the initiator identity of N-formylmethionyl-tRNA by promoting its recognition by IF2 and preventing the misappropriation of this tRNA by the elongation apparatus. This chain is Methionyl-tRNA formyltransferase, found in Malacoplasma penetrans (strain HF-2) (Mycoplasma penetrans).